Consider the following 114-residue polypeptide: T cell receptor alpha variable 12-3 (114 aa).

An N-terminal signal peptide occupies residues 1–21 (MMKSLRVLLVILWLQLSWVWS). The Ig-like domain occupies 24–114 (KEVEQDPGPL…DSATYLCAMS (91 aa)). An N-linked (GlcNAc...) asparagine glycan is attached at Asn44. A disulfide bridge connects residues Cys45 and Cys111.

As to quaternary structure, alpha-beta TR is a heterodimer composed of an alpha and beta chain; disulfide-linked. The alpha-beta TR is associated with the transmembrane signaling CD3 coreceptor proteins to form the TR-CD3 (TcR or TCR). The assembly of alpha-beta TR heterodimers with CD3 occurs in the endoplasmic reticulum where a single alpha-beta TR heterodimer associates with one CD3D-CD3E heterodimer, one CD3G-CD3E heterodimer and one CD247 homodimer forming a stable octameric structure. CD3D-CD3E and CD3G-CD3E heterodimers preferentially associate with TR alpha and TR beta chains, respectively. The association of the CD247 homodimer is the last step of TcR assembly in the endoplasmic reticulum and is required for transport to the cell surface.

The protein resides in the cell membrane. Functionally, v region of the variable domain of T cell receptor (TR) alpha chain that participates in the antigen recognition. Alpha-beta T cell receptors are antigen specific receptors which are essential to the immune response and are present on the cell surface of T lymphocytes. Recognize peptide-major histocompatibility (MH) (pMH) complexes that are displayed by antigen presenting cells (APC), a prerequisite for efficient T cell adaptive immunity against pathogens. Binding of alpha-beta TR to pMH complex initiates TR-CD3 clustering on the cell surface and intracellular activation of LCK that phosphorylates the ITAM motifs of CD3G, CD3D, CD3E and CD247 enabling the recruitment of ZAP70. In turn ZAP70 phosphorylates LAT, which recruits numerous signaling molecules to form the LAT signalosome. The LAT signalosome propagates signal branching to three major signaling pathways, the calcium, the mitogen-activated protein kinase (MAPK) kinase and the nuclear factor NF-kappa-B (NF-kB) pathways, leading to the mobilization of transcription factors that are critical for gene expression and essential for T cell growth and differentiation. The T cell repertoire is generated in the thymus, by V-(D)-J rearrangement. This repertoire is then shaped by intrathymic selection events to generate a peripheral T cell pool of self-MH restricted, non-autoaggressive T cells. Post-thymic interaction of alpha-beta TR with the pMH complexes shapes TR structural and functional avidity. This is T cell receptor alpha variable 12-3 from Homo sapiens (Human).